Consider the following 2173-residue polypeptide: Mediator of DNA damage checkpoint protein 1 (2173 aa).

Positions 1–19 (MEDTQAIDWDVEEEEETEQ) are enriched in acidic residues. The interval 1 to 22 (MEDTQAIDWDVEEEEETEQSSE) is disordered. The interval 1–150 (MEDTQAIDWD…SRGPLTVEET (150 aa)) is interaction with CHEK2. The tract at residues 2–222 (EDTQAIDWDV…PFAFNLNSDT (221 aa)) is interaction with the MRN complex. Thr4 is subject to Phosphothreonine. Residues 54–105 (NVVGRMPDCSVALPFPSISKQHAEIEILAWDKAPILRDCGSLNGTQILRPPK) form the FHA domain. Ser108 bears the Phosphoserine mark. The required for nuclear localization (NLS1) stretch occupies residues 145–570 (LTVEETPRVQ…PAKLLVVSLE (426 aa)). The residue at position 146 (Thr146) is a Phosphothreonine. Residues Ser168, Ser176, Ser198, and Ser220 each carry the phosphoserine modification. The interval 198–320 (SDEEGHSPVL…PPGRPAEVHL (123 aa)) is disordered. Thr222 bears the Phosphothreonine mark. A compositionally biased stretch (low complexity) spans 227 to 244 (GQQSATEEASSAARRGAT). The span at 259–276 (QLEKDQPSVKERDNDTKV) shows a compositional bias: basic and acidic residues. Ser301 carries the post-translational modification Phosphoserine. Position 303 is a phosphothreonine (Thr303). Basic and acidic residues predominate over residues 308–320 (DSRPPGRPAEVHL). A Phosphoserine modification is found at Ser331. Position 333 is a phosphothreonine (Thr333). A disordered region spans residues 359–383 (GTRGPGAPGLSHLQESQAGSDTDVE). Residues Ser374 and Ser378 each carry the phosphoserine modification. Thr380 carries the phosphothreonine modification. A phosphoserine mark is found at Ser396, Ser399, and Ser404. Position 406 is a phosphothreonine (Thr406). Phosphoserine is present on Ser413. The interval 444 to 515 (LQRSQTTTGR…SSPGIHLERS (72 aa)) is disordered. Thr451 is subject to Phosphothreonine. The residue at position 455 (Ser455) is a Phosphoserine. Thr457 bears the Phosphothreonine mark. Phosphoserine is present on residues Ser487, Ser497, Ser500, Ser506, Ser507, and Ser515. Position 525 is a phosphothreonine (Thr525). Ser592 carries the post-translational modification Phosphoserine. Residue Lys618 forms a Glycyl lysine isopeptide (Lys-Gly) (interchain with G-Cter in SUMO1); alternate linkage. Lys618 is covalently cross-linked (Glycyl lysine isopeptide (Lys-Gly) (interchain with G-Cter in SUMO2); alternate). Phosphoserine is present on Ser631. 2 disordered regions span residues 652-697 (VDTD…EDPD) and 773-1770 (HLEA…TLRS). Positions 673–687 (GREREQHVGRTKDSE) are enriched in basic and acidic residues. Over residues 688–697 (DNCDDSEDPD) the composition is skewed to acidic residues. Phosphoserine is present on residues Ser782 and Ser795. Residue Lys814 is modified to N6-acetyllysine. Composition is skewed to basic and acidic residues over residues 821–846 (ETAE…ERQT), 853–864 (ELTRGIQDREQK), 870–903 (DTQR…KEIQ), and 916–953 (AFER…RGEP). 5 positions are modified to phosphoserine: Ser957, Ser1000, Ser1035, Ser1070, and Ser1088. A compositionally biased stretch (polar residues) spans 957–969 (SQDQKGQASSPTS). The segment covering 1079 to 1090 (TIRKTGQDRSQE) has biased composition (basic and acidic residues). The span at 1105-1115 (PKPKIITRKSS) shows a compositional bias: basic residues. Over residues 1131 to 1156 (PSTSTAQPVTPKPTSQATRSRTNRSS) the composition is skewed to polar residues. The interval 1150-1694 (SRTNRSSVKT…KNRSSVKTPE (545 aa)) is interaction with the PRKDC complex. The segment covering 1157 to 1169 (VKTPEPVVPTVPE) has biased composition (low complexity). Thr1159 is subject to Phosphothreonine. Positions 1171–1189 (QPSTSTDQPVASEPTSQAT) are enriched in polar residues. Thr1200 bears the Phosphothreonine mark. The residue at position 1237 (Ser1237) is a Phosphoserine. Phosphothreonine occurs at positions 1241, 1282, and 1304. Residues 1280–1292 (VKTPEPVVPTVPE) are compositionally biased toward low complexity. Polar residues predominate over residues 1294–1320 (QPSTSTDQPVTSEPTSQATRGRTNRSS). Residues 1321–1333 (VKTPEPVVPTVPE) show a composition bias toward low complexity. A compositionally biased stretch (polar residues) spans 1335–1353 (QPSTSTDQPVASEPTSQAT). Positions 1390–1402 (TSRTTRSRTNMSS) are enriched in low complexity. 4 stretches are compositionally biased toward polar residues: residues 1418–1434 (PSTS…TYQP), 1456–1487 (KLQS…SVKS), 1499–1527 (QPST…SSVK), and 1540–1559 (QPST…QATR). Phosphoserine occurs at positions 1483 and 1484. The residue at position 1486 (Lys1486) is an N6-acetyllysine. Phosphothreonine is present on residues Thr1509 and Thr1550. The span at 1567–1578 (VKTPKIVVPTVP) shows a compositional bias: low complexity. The span at 1581 to 1598 (QASTSTDQPVTSEPTSRT) shows a compositional bias: polar residues. 2 positions are modified to phosphothreonine: Thr1617 and Thr1632. The segment covering 1626–1639 (STDQPITPKPTSRA) has biased composition (polar residues). Phosphoserine is present on Ser1648. Phosphothreonine occurs at positions 1651 and 1673. Residues 1664–1680 (PSTSRSQLVTPEPTSRA) are compositionally biased toward polar residues. Residue Ser1688 is modified to Phosphoserine. Residues Thr1692, Thr1714, Thr1748, and Thr1755 each carry the phosphothreonine modification. Positions 1705–1721 (PTTSTDQPVTPKPTSRA) are enriched in polar residues. A compositionally biased stretch (polar residues) spans 1761–1770 (QGSQSKTLRS). A Phosphoserine modification is found at Ser1765. A Phosphothreonine modification is found at Thr1781. A required for nuclear localization (NLS2) region spans residues 1782–2173 (PEFQSPVTTD…VLSPLEMSST (392 aa)). Ser1786 and Ser1795 each carry phosphoserine. The tract at residues 1809-1971 (RATGNPGSLT…NRSLRRTKLN (163 aa)) is disordered. Lys1824 participates in a covalent cross-link: Glycyl lysine isopeptide (Lys-Gly) (interchain with G-Cter in SUMO2). A Phosphoserine modification is found at Ser1859. Lys1874 is covalently cross-linked (Glycyl lysine isopeptide (Lys-Gly) (interchain with G-Cter in SUMO2)). Thr1884 carries the phosphothreonine modification. Ser1904 carries the post-translational modification Phosphoserine. Polar residues predominate over residues 1907–1920 (HQKQPQRGEVSQKT). Lys1924 participates in a covalent cross-link: Glycyl lysine isopeptide (Lys-Gly) (interchain with G-Cter in SUMO1); alternate. Lys1924 participates in a covalent cross-link: Glycyl lysine isopeptide (Lys-Gly) (interchain with G-Cter in SUMO2); alternate. The segment covering 1931 to 1941 (AEKPGKEEDVM) has biased composition (basic and acidic residues). Position 1942 is a phosphothreonine (Thr1942). BRCT domains follow at residues 1976–2054 (APKV…EYVV) and 2075–2166 (RERR…FVLS). Residue Arg2027 is modified to Omega-N-methylarginine.

In terms of assembly, homodimer. Interacts with H2AX, which requires phosphorylation of H2AX on 'Ser-139'. Interacts with the MRN complex, composed of MRE11, RAD50, and NBN. Interacts with CHEK2, which requires ATM-mediated phosphorylation of 'Thr-68' within the FHA domain of CHEK2. Interacts constitutively with the BRCA1-BARD1 complex, SMC1A and TP53BP1. Interacts with ATM and FANCD2, and these interactions are reduced upon DNA damage. Also interacts with the PRKDC complex, composed of XRCC6/KU70, XRCC5/KU80 and PRKDC/XRCC7. This interaction may be required for PRKDC autophosphorylation, which is essential for DNA double strand break (DSB) repair. When phosphorylated by ATM, interacts with RNF8 (via FHA domain). Interacts with CEP164. When phosphorylated, interacts with APTX (via FHA-like domain). Interacts (when phosphorylated) with TOPBP1; promoting TOPBP1 localization to DNA damage sites during mitosis. Interacts (when phosphorylated) with NBN; promoting NBN and MRN complex localization to DNA damage sites. Post-translationally, phosphorylated upon exposure to ionizing radiation (IR), ultraviolet radiation (UV), and hydroxyurea (HU). Phosphorylation in response to IR requires ATM, NBN, and possibly CHEK2. Also phosphorylated during the G2/M phase of the cell cycle and during activation of the mitotic spindle checkpoint. Phosphorylation at Thr-4 by ATM stabilizes and enhances homodimerization via the FHA domain. Phosphorylated at Ser-168 and Ser-198 by CK2 in response to DNA damage during mitosis, promoting interaction with TOPBP1. Phosphorylated by CK2 in response to DNA damage, promoting interaction with NBN and recruitment of the MRN complex to DNA damage sites. In terms of processing, sumoylation at Lys-1924 by PIAS4 following DNA damage promotes ubiquitin-mediated degradation. Ubiquitinated by RNF4, leading to proteasomal degradation; undergoes 'Lys-48'-linked polyubiquitination.

It localises to the nucleus. The protein localises to the chromosome. Its function is as follows. Histone reader protein required for checkpoint-mediated cell cycle arrest in response to DNA damage within both the S phase and G2/M phases of the cell cycle. Specifically recognizes and binds histone H2AX phosphorylated at 'Ser-139', a marker of DNA damage, serving as a scaffold for the recruitment of DNA repair and signal transduction proteins to discrete foci of DNA damage sites. Also required for downstream events subsequent to the recruitment of these proteins. These include phosphorylation and activation of the ATM, CHEK1 and CHEK2 kinases, and stabilization of TP53/p53 and apoptosis. ATM and CHEK2 may also be activated independently by a parallel pathway mediated by TP53BP1. Required for chromosomal stability during mitosis by promoting recruitment of TOPBP1 to DNA double strand breaks (DSBs): TOPBP1 forms filamentous assemblies that bridge MDC1 and tether broken chromosomes during mitosis. Required for the repair of DSBs via homologous recombination by promoting recruitment of NBN component of the MRN complex to DSBs. The protein is Mediator of DNA damage checkpoint protein 1 (MDC1) of Macaca mulatta (Rhesus macaque).